Here is a 514-residue protein sequence, read N- to C-terminus: Peptide chain release factor 3 (514 aa).

Residues 8–268 (KKRRTFAIIS…TFLEFAPEPH (261 aa)) enclose the tr-type G domain. Residues 17-24 (SHPDAGKT), 85-89 (DTPGH), and 139-142 (NKLD) each bind GTP.

It belongs to the TRAFAC class translation factor GTPase superfamily. Classic translation factor GTPase family. PrfC subfamily.

Its subcellular location is the cytoplasm. Its function is as follows. Increases the formation of ribosomal termination complexes and stimulates activities of RF-1 and RF-2. It binds guanine nucleotides and has strong preference for UGA stop codons. It may interact directly with the ribosome. The stimulation of RF-1 and RF-2 is significantly reduced by GTP and GDP, but not by GMP. The polypeptide is Peptide chain release factor 3 (Streptococcus pyogenes serotype M1).